We begin with the raw amino-acid sequence, 737 residues long: Polyribonucleotide nucleotidyltransferase (737 aa).

Residues D489 and D495 each contribute to the Mg(2+) site. A KH domain is found at 556-615 (PKIDTIKIDVDKIKIVIGKGGETIDKIIAETGVKIDIDEEGNVSIYSSDQDAINRAKEII). An S1 motif domain is found at 625–693 (DEVYRAKVVR…EKGRIDASMK (69 aa)). Positions 691-737 (SMKALLPRPPKPEHDEKGEKSERPHRPRHHKDHKPKKEFTETPKDSE) are disordered. Over residues 700 to 714 (PKPEHDEKGEKSERP) the composition is skewed to basic and acidic residues. A compositionally biased stretch (basic residues) spans 715–724 (HRPRHHKDHK). The segment covering 725–737 (PKKEFTETPKDSE) has biased composition (basic and acidic residues).

The protein belongs to the polyribonucleotide nucleotidyltransferase family. Mg(2+) serves as cofactor.

The protein resides in the cytoplasm. The enzyme catalyses RNA(n+1) + phosphate = RNA(n) + a ribonucleoside 5'-diphosphate. In terms of biological role, involved in mRNA degradation. Catalyzes the phosphorolysis of single-stranded polyribonucleotides processively in the 3'- to 5'-direction. This is Polyribonucleotide nucleotidyltransferase from Streptococcus pneumoniae (strain ATCC 700669 / Spain 23F-1).